A 373-amino-acid polypeptide reads, in one-letter code: Ribonuclease D (373 aa).

Positions 3 to 171 (YQLITTDAGL…MAKRLVQETE (169 aa)) constitute a 3'-5' exonuclease domain. The HRDC domain maps to 210-289 (RPRQLGCLQK…AEAAELEESA (80 aa)).

Belongs to the RNase D family. The cofactor is a divalent metal cation.

It is found in the cytoplasm. It carries out the reaction Exonucleolytic cleavage that removes extra residues from the 3'-terminus of tRNA to produce 5'-mononucleotides.. In terms of biological role, exonuclease involved in the 3' processing of various precursor tRNAs. Initiates hydrolysis at the 3'-terminus of an RNA molecule and releases 5'-mononucleotides. This chain is Ribonuclease D, found in Serratia proteamaculans (strain 568).